An 815-amino-acid polypeptide reads, in one-letter code: Protein SMAX1-LIKE 3 (815 aa).

Positions 8-171 (VEQALTADAA…TKVEQAVSLE (164 aa)) constitute a Clp R domain. 2 repeat regions span residues 12-80 (LTAD…LNRL) and 99-171 (ISNA…VSLE). The tract at residues 750–769 (SRACSPPSNQKSDGSDQPED) is disordered. An EAR motif is present at residues 778-782 (LDLNL).

It belongs to the ClpA/ClpB family. As to quaternary structure, interacts probably with TPL/TPR in an EAR-motif dependent manner. In terms of tissue distribution, expressed in roots and seedlings.

May function in a transcriptional corepressor complex. The polypeptide is Protein SMAX1-LIKE 3 (Arabidopsis thaliana (Mouse-ear cress)).